Consider the following 258-residue polypeptide: Thiazole synthase (258 aa).

Lys98 (schiff-base intermediate with DXP) is an active-site residue. 1-deoxy-D-xylulose 5-phosphate-binding positions include Gly159, 185-186, and 207-208; these read AG and NT.

Belongs to the ThiG family. As to quaternary structure, homotetramer. Forms heterodimers with either ThiH or ThiS.

It localises to the cytoplasm. It catalyses the reaction [ThiS sulfur-carrier protein]-C-terminal-Gly-aminoethanethioate + 2-iminoacetate + 1-deoxy-D-xylulose 5-phosphate = [ThiS sulfur-carrier protein]-C-terminal Gly-Gly + 2-[(2R,5Z)-2-carboxy-4-methylthiazol-5(2H)-ylidene]ethyl phosphate + 2 H2O + H(+). Its pathway is cofactor biosynthesis; thiamine diphosphate biosynthesis. Its function is as follows. Catalyzes the rearrangement of 1-deoxy-D-xylulose 5-phosphate (DXP) to produce the thiazole phosphate moiety of thiamine. Sulfur is provided by the thiocarboxylate moiety of the carrier protein ThiS. In vitro, sulfur can be provided by H(2)S. The chain is Thiazole synthase from Bacillus thuringiensis subsp. konkukian (strain 97-27).